The sequence spans 370 residues: Protein SHI RELATED SEQUENCE 1 (370 aa).

The interval 1-37 (MAGFFSLDGGGGGGGGGGNNQEDHRSNTNPPPPVSEA) is disordered. Gly residues predominate over residues 8–19 (DGGGGGGGGGGN). Residues Cys144, Cys147, Cys155, Cys160, Cys164, and Cys171 each coordinate Zn(2+). Residues 144–171 (CQDCGNQAKKDCSHMRCRTCCKSRGFEC) constitute a DNA-binding region (zn(2)-C6 fungal-type; degenerate). Residues 271–274 (IGGH) carry the Required for homo- and heterodimerization motif.

The protein belongs to the SHI protein family. As to quaternary structure, forms homodimers and heterodimers with LRP1. In terms of tissue distribution, expressed in flowers, seeds and seedlings.

It is found in the nucleus. Functionally, transcription activator that binds DNA on 5'-ACTCTAC-3' and promotes auxin homeostasis-regulating gene expression (e.g. YUC genes), as well as genes affecting stamen development, cell expansion and timing of flowering. Synergistically with other SHI-related proteins, regulates gynoecium, stamen and leaf development in a dose-dependent manner, controlling apical-basal patterning. Promotes style and stigma formation, and influences vascular development during gynoecium development. May also have a role in the formation and/or maintenance of the shoot apical meristem (SAM). This Arabidopsis thaliana (Mouse-ear cress) protein is Protein SHI RELATED SEQUENCE 1 (SRS1).